Here is a 143-residue protein sequence, read N- to C-terminus: Small ribosomal subunit protein uS11c (143 aa).

It belongs to the universal ribosomal protein uS11 family. In terms of assembly, part of the 30S ribosomal subunit.

Its subcellular location is the plastid. The protein resides in the chloroplast. The chain is Small ribosomal subunit protein uS11c from Zea mays (Maize).